The primary structure comprises 270 residues: Shikimate dehydrogenase (NADP(+)) (270 aa).

Shikimate-binding positions include 14–16 and Thr-61; that span reads SKS. Catalysis depends on Lys-65, which acts as the Proton acceptor. Shikimate-binding residues include Asn-86 and Asp-101. NADP(+) contacts are provided by residues 126–130, 150–155, and Met-213; these read GAGGA and NRTVSK. Tyr-215 is a binding site for shikimate. Gly-237 is an NADP(+) binding site.

This sequence belongs to the shikimate dehydrogenase family. Homodimer.

It catalyses the reaction shikimate + NADP(+) = 3-dehydroshikimate + NADPH + H(+). The protein operates within metabolic intermediate biosynthesis; chorismate biosynthesis; chorismate from D-erythrose 4-phosphate and phosphoenolpyruvate: step 4/7. Functionally, involved in the biosynthesis of the chorismate, which leads to the biosynthesis of aromatic amino acids. Catalyzes the reversible NADPH linked reduction of 3-dehydroshikimate (DHSA) to yield shikimate (SA). The polypeptide is Shikimate dehydrogenase (NADP(+)) (Hahella chejuensis (strain KCTC 2396)).